Here is a 319-residue protein sequence, read N- to C-terminus: Ferrochelatase (319 aa).

Positions 193 and 274 each coordinate Fe cation.

The protein belongs to the ferrochelatase family.

It localises to the cytoplasm. It catalyses the reaction heme b + 2 H(+) = protoporphyrin IX + Fe(2+). Its pathway is porphyrin-containing compound metabolism; protoheme biosynthesis; protoheme from protoporphyrin-IX: step 1/1. In terms of biological role, catalyzes the ferrous insertion into protoporphyrin IX. The chain is Ferrochelatase from Actinobacillus pleuropneumoniae serotype 5b (strain L20).